Consider the following 545-residue polypeptide: Bifunctional purine biosynthesis protein PurH (545 aa).

The MGS-like domain occupies 1-150 (MTNTNRPIRR…KNHATVAIVT (150 aa)).

The protein belongs to the PurH family.

The catalysed reaction is (6R)-10-formyltetrahydrofolate + 5-amino-1-(5-phospho-beta-D-ribosyl)imidazole-4-carboxamide = 5-formamido-1-(5-phospho-D-ribosyl)imidazole-4-carboxamide + (6S)-5,6,7,8-tetrahydrofolate. The enzyme catalyses IMP + H2O = 5-formamido-1-(5-phospho-D-ribosyl)imidazole-4-carboxamide. It functions in the pathway purine metabolism; IMP biosynthesis via de novo pathway; 5-formamido-1-(5-phospho-D-ribosyl)imidazole-4-carboxamide from 5-amino-1-(5-phospho-D-ribosyl)imidazole-4-carboxamide (10-formyl THF route): step 1/1. It participates in purine metabolism; IMP biosynthesis via de novo pathway; IMP from 5-formamido-1-(5-phospho-D-ribosyl)imidazole-4-carboxamide: step 1/1. The sequence is that of Bifunctional purine biosynthesis protein PurH from Bifidobacterium longum (strain DJO10A).